The following is a 465-amino-acid chain: Ribosomal oxygenase 2 (465 aa).

The JmjC domain occupies 139–271; that stretch reads QPQRFKDELW…NSWGDFLLDT (133 aa). The Fe cation site is built by His179, Asp181, and His240. Phosphoserine is present on Ser309.

It belongs to the ROX family. MINA53 subfamily. Fe(2+) serves as cofactor.

Its subcellular location is the nucleus. It localises to the nucleolus. The enzyme catalyses L-histidyl-[ribosomal protein uL15] + 2-oxoglutarate + O2 = (3S)-3-hydroxy-L-histidyl-[ribosomal protein uL15] + succinate + CO2. The catalysed reaction is L-histidyl-[protein] + 2-oxoglutarate + O2 = (3S)-3-hydroxy-L-histidyl-[protein] + succinate + CO2. In terms of biological role, oxygenase that can act as both a histone lysine demethylase and a ribosomal histidine hydroxylase. Is involved in the demethylation of trimethylated 'Lys-9' on histone H3 (H3K9me3), leading to an increase in ribosomal RNA expression. Also catalyzes the hydroxylation of 60S ribosomal protein L27a on 'His-39'. May play an important role in cell growth and survival. May be involved in ribosome biogenesis, most likely during the assembly process of pre-ribosomal particles. The chain is Ribosomal oxygenase 2 (RIOX2) from Pongo abelii (Sumatran orangutan).